A 1382-amino-acid chain; its full sequence is Ninein-like protein (1382 aa).

EF-hand domains are found at residues 7–42 (HYVS…LHLE) and 41–76 (LEQQ…VLSS). Residues 144-164 (ASLESVESPKSDEEAESTKEA) are disordered. S148 carries the post-translational modification Phosphoserine. The segment covering 150–164 (ESPKSDEEAESTKEA) has biased composition (basic and acidic residues). EF-hand domains follow at residues 196–231 (TPES…VGLQ) and 233–268 (LEKE…HEPA). 5 residues coordinate Ca(2+): D246, D248, D250, K252, and E257. Coiled coils occupy residues 384–424 (QELS…MDDC), 484–579 (AGLR…WARL), and 616–699 (IETE…QLQD). The KEN box motif lies at 495-497 (KEN). Residues 633-641 (RTQLETKVN) carry the D-box motif. 2 disordered regions span residues 857 to 969 (PLAW…ASCR) and 982 to 1006 (RARS…GALE). Over residues 991–1004 (QEQASEQQARAEGA) the composition is skewed to low complexity. The stretch at 1046 to 1375 (ETKIALEREK…RALNKLVSRI (330 aa)) forms a coiled coil.

As to quaternary structure, interacts with gamma-tubulin and TUBGCP4. Interacts with anaphase promoting complex/cyclosome (APC/C). Interacts with CDC20 and FZR1. Isoform 2 interacts with LCA5 and USH2A. Isoform 2 interacts with DZANK1. In terms of processing, phosphorylated by PLK1 which disrupts its centrosome association and interaction with gamma-tubulin. Post-translationally, ubiquitinated by the APC/C complex leading to its degradation. As to expression, expressed in KYSE-150 esophageal carcinoma, HeLa cervical carcinoma and U2OS osteosarcoma cells. Expression is regulated in a cell cycle-dependent manner and peaks during G2/M phase (at protein level). Expressed in fetal heart, skeletal muscle, liver, lung and cochlea, and in adult brain, testis, kidney and retina.

The protein localises to the cytoplasm. It localises to the cytoskeleton. Its subcellular location is the microtubule organizing center. The protein resides in the centrosome. Its function is as follows. Involved in the microtubule organization in interphase cells. Overexpression induces the fragmentation of the Golgi, and causes lysosomes to disperse toward the cell periphery; it also interferes with mitotic spindle assembly. Involved in vesicle transport in photoreceptor cells. May play a role in ovarian carcinogenesis. The protein is Ninein-like protein (NINL) of Homo sapiens (Human).